The chain runs to 411 residues: Putative ion-transport protein YfeO (411 aa).

Helical transmembrane passes span Met9–Ala29, Asp54–Ile74, Ala99–Pro119, Ile149–Ile169, Leu186–Pro206, Ile223–Cys243, Val258–Leu278, Leu296–Ala316, Gly322–His342, Val343–Val363, and Leu386–Ala406.

The protein belongs to the chloride channel (TC 2.A.49) family.

The protein localises to the cell membrane. This is Putative ion-transport protein YfeO from Salmonella agona (strain SL483).